Consider the following 478-residue polypeptide: Membrane-bound lytic murein transglycosylase F (478 aa).

A signal peptide spans 1 to 22; the sequence is MTRFLFAIILGFLLTACQQVTV. The segment at 23 to 257 is non-LT domain; sequence EETEYVPHKL…HLNEKYFGHV (235 aa). The segment at 258–478 is LT domain; it reads KRFDYIDTRA…PGTLSPDKPK (221 aa). Residue glutamate 302 is part of the active site. Residues 446-478 form a disordered region; the sequence is SKQQNSDEEEPSDLASEDGPAPVPGTLSPDKPK. The segment covering 451-461 has biased composition (acidic residues); that stretch reads SDEEEPSDLAS.

This sequence in the N-terminal section; belongs to the bacterial solute-binding protein 3 family. It in the C-terminal section; belongs to the transglycosylase Slt family.

It is found in the cell outer membrane. It catalyses the reaction Exolytic cleavage of the (1-&gt;4)-beta-glycosidic linkage between N-acetylmuramic acid (MurNAc) and N-acetylglucosamine (GlcNAc) residues in peptidoglycan, from either the reducing or the non-reducing ends of the peptidoglycan chains, with concomitant formation of a 1,6-anhydrobond in the MurNAc residue.. Its function is as follows. Murein-degrading enzyme that degrades murein glycan strands and insoluble, high-molecular weight murein sacculi, with the concomitant formation of a 1,6-anhydromuramoyl product. Lytic transglycosylases (LTs) play an integral role in the metabolism of the peptidoglycan (PG) sacculus. Their lytic action creates space within the PG sacculus to allow for its expansion as well as for the insertion of various structures such as secretion systems and flagella. This Shewanella sp. (strain MR-4) protein is Membrane-bound lytic murein transglycosylase F.